The primary structure comprises 366 residues: Flagellar P-ring protein (366 aa).

An N-terminal signal peptide occupies residues 1–20 (MVIKFLSALILLLVTTAVQA).

This sequence belongs to the FlgI family. As to quaternary structure, the basal body constitutes a major portion of the flagellar organelle and consists of four rings (L,P,S, and M) mounted on a central rod.

The protein resides in the periplasm. It localises to the bacterial flagellum basal body. Functionally, assembles around the rod to form the L-ring and probably protects the motor/basal body from shearing forces during rotation. This chain is Flagellar P-ring protein, found in Escherichia coli O6:H1 (strain CFT073 / ATCC 700928 / UPEC).